A 92-amino-acid polypeptide reads, in one-letter code: PqqA binding protein (92 aa).

The protein belongs to the PqqD family. Monomer. Interacts with PqqE.

Its pathway is cofactor biosynthesis; pyrroloquinoline quinone biosynthesis. Its function is as follows. Functions as a PqqA binding protein and presents PqqA to PqqE, in the pyrroloquinoline quinone (PQQ) biosynthetic pathway. This is PqqA binding protein from Xanthomonas campestris pv. campestris (strain B100).